We begin with the raw amino-acid sequence, 1053 residues long: LRR receptor-like serine/threonine-protein kinase GHR1 (1053 aa).

The first 18 residues, 1-18 (MNLSRILLLSMFFLSAMG), serve as a signal peptide directing secretion. Residues 19 to 630 (QLPSQDIMAL…NKSTNKLVKV (612 aa)) lie on the Extracellular side of the membrane. 13 LRR repeats span residues 73 to 93 (GVVL…FSNL), 94 to 119 (TKLV…SFKS), 121 to 141 (QFLD…IGRS), 142 to 165 (VSLR…MGGL), 166 to 189 (ISLQ…LTRL), 191 to 212 (DLLY…GFEL), 213 to 237 (ISSL…FFLL), 239 to 260 (NASY…LLPG), 262 to 285 (SESI…GFQL), 286 to 309 (FQNL…FNYV), 310 to 333 (YDLE…LLKG), 335 to 357 (SLLL…SIMS), and 358 to 384 (TTLH…CVLL). Residue N92 is glycosylated (N-linked (GlcNAc...) asparagine). 2 positions are modified to phosphoserine; by HT1: S100 and S102. An N-linked (GlcNAc...) asparagine glycan is attached at N103. Residues S105 and S126 each carry the phosphoserine; by HT1 modification. N-linked (GlcNAc...) asparagine glycans are attached at residues N146 and N153. The N-linked (GlcNAc...) asparagine glycan is linked to N196. N-linked (GlcNAc...) asparagine glycosylation occurs at N239. S262 is modified (phosphoserine; by HT1). Residue N269 is glycosylated (N-linked (GlcNAc...) asparagine). The residue at position 278 (S278) is a Phosphoserine; by HT1. T280 is modified (phosphothreonine; by HT1). A Phosphoserine; by HT1 modification is found at S281. S325 bears the Phosphoserine; by HT1 mark. N347 is a glycosylation site (N-linked (GlcNAc...) asparagine). Residue N394 is glycosylated (N-linked (GlcNAc...) asparagine). 8 LRR repeats span residues 401–425 (WENI…TPQL), 426–449 (LRAN…IPTH), 450–474 (YPKL…LLSM), 476–498 (TLEE…PSSG), 499–521 (SRIR…VFGS), 522–546 (LTNL…MNDI), 548–570 (SLSS…LSSN), and 572–592 (MAFN…LKNF). Y406 carries the phosphotyrosine; by HT1 modification. Residue S410 is modified to Phosphoserine; by HT1. Phosphothreonine; by HT1 is present on T415. A Phosphoserine; by HT1 modification is found at S417. N432 carries N-linked (GlcNAc...) asparagine glycosylation. At S434 the chain carries Phosphoserine; by HT1. N-linked (GlcNAc...) asparagine glycans are attached at residues N534, N566, and N575. Residues S613, S614, and S616 each carry the phosphoserine; by HT1 modification. An N-linked (GlcNAc...) asparagine glycan is attached at N621. The helical transmembrane segment at 631–651 (VIIVSCAVALIILILVAILLF) threads the bilayer. Over 652–1053 (CICKSRRREE…KTIYEDLSSI (402 aa)) the chain is Cytoplasmic. The segment covering 662-671 (RSITGKETNR) has biased composition (basic and acidic residues). Residues 662–684 (RSITGKETNRRAQTIPSGSGGGM) are disordered. A phosphothreonine; by HT1 mark is found at T669 and T675. 5 positions are modified to phosphoserine; by HT1: S678, S680, S698, S699, and S700. S704 carries the post-translational modification Phosphoserine. T713 is subject to Phosphothreonine; by HT1. 2 positions are modified to phosphoserine; by HT1: S716 and S718. T720 is modified (phosphothreonine; by HT1). Residues S721, S724, and S760 each carry the phosphoserine; by HT1 modification. Residue T764 is modified to Phosphothreonine; by HT1. At S769 the chain carries Phosphoserine; by HT1. A Protein kinase domain is found at 770–1053 (RAPAEVLGRS…KTIYEDLSSI (284 aa)). Residues 776 to 784 (LGRSSHGTS) and K798 contribute to the ATP site. Phosphothreonine; by HT1 occurs at positions 928 and 1010. S1015 is subject to Phosphoserine; by HT1. T1045 carries the phosphothreonine; by HT1 modification. At Y1047 the chain carries Phosphotyrosine; by HT1. A phosphoserine; by HT1 mark is found at S1051 and S1052.

The protein belongs to the protein kinase superfamily. Ser/Thr protein kinase family. Interacts with SLAC1 (via N-terminus). Binds to ABI2, but not ABI1. Interacts with CPK3. Post-translationally, phosphorylated by HT1; this phosphorylation is inhibited by MPK12 and MPK4. As to expression, expressed in guard cells and in the vasculature of roots and leaves.

The protein resides in the cell membrane. It carries out the reaction L-seryl-[protein] + ATP = O-phospho-L-seryl-[protein] + ADP + H(+). The enzyme catalyses L-threonyl-[protein] + ATP = O-phospho-L-threonyl-[protein] + ADP + H(+). Negatively regulated by ABI2. Functionally, receptor kinase acting as an early component in abscisic acid (ABA) signaling. Required for darkness, ABA, high CO(2) and hydrogen peroxide (H(2)O(2)) induction of S-type anion currents in guard cells leading to stomatal closure, possibly via the phosphorylation and activation of the anion channel SLAC1 and as a scaffolding component. Seems to act in parallel with SRK2E/OST1 in the ABA signaling pathway which regulates stomatal movement. Binds ATP. Involved in the local and/or systemic stomatal responses (e.g. stomatal closure) to light stress. This Arabidopsis thaliana (Mouse-ear cress) protein is LRR receptor-like serine/threonine-protein kinase GHR1.